The sequence spans 574 residues: Streptolysin O (574 aa).

Residues 1–36 (MKDMSNKKIFKKYSRVAGLLTAALIVGNLVTANADS) form the signal peptide. Over residues 37 to 52 (NKQNTANTETTTTNEQ) the composition is skewed to low complexity. Disordered regions lie at residues 37 to 64 (NKQN…TTEK) and 84 to 111 (KEMP…HTEE). Residues 53–64 (PKPESSELTTEK) show a composition bias toward basic and acidic residues. The next 4 membrane-spanning stretches (beta stranded) occupy residues 263–276 (KSQI…NSKI), 283–292 (IDFKSISKGE), 361–370 (SNDVEAAFSA), and 378–390 (KTNG…LENS). The Conserved undecapeptide motif lies at 532 to 542 (ECTGLAWEWWR). The short motif at 564–565 (TL) is the Cholesterol binding element.

This sequence belongs to the cholesterol-dependent cytolysin family. In terms of assembly, homooligomeric pore complex of 35 to 50 subunits; when inserted in the host membrane.

It is found in the secreted. Its subcellular location is the host cell membrane. Its function is as follows. A cholesterol-dependent toxin that causes cytolysis by forming pores in cholesterol containing host membranes. After binding to target membranes, the protein undergoes a major conformation change, leading to its insertion in the host membrane and formation of an oligomeric pore complex. Cholesterol is required for binding to host membranes, membrane insertion and pore formation; cholesterol binding is mediated by a Thr-Leu pair in the C-terminus. Can be reversibly inactivated by oxidation. This Streptococcus dysgalactiae subsp. equisimilis (Streptococcus equisimilis) protein is Streptolysin O (slo).